A 378-amino-acid polypeptide reads, in one-letter code: Erythronate-4-phosphate dehydrogenase (378 aa).

Ser45 and Thr66 together coordinate substrate. NAD(+) contacts are provided by Asp146 and Thr175. Arg208 is an active-site residue. Asp232 is a binding site for NAD(+). Glu237 is a catalytic residue. The active-site Proton donor is the His254. An NAD(+)-binding site is contributed by Gly257. Tyr258 is a substrate binding site.

This sequence belongs to the D-isomer specific 2-hydroxyacid dehydrogenase family. PdxB subfamily. In terms of assembly, homodimer.

It is found in the cytoplasm. It catalyses the reaction 4-phospho-D-erythronate + NAD(+) = (R)-3-hydroxy-2-oxo-4-phosphooxybutanoate + NADH + H(+). It participates in cofactor biosynthesis; pyridoxine 5'-phosphate biosynthesis; pyridoxine 5'-phosphate from D-erythrose 4-phosphate: step 2/5. Functionally, catalyzes the oxidation of erythronate-4-phosphate to 3-hydroxy-2-oxo-4-phosphonooxybutanoate. The polypeptide is Erythronate-4-phosphate dehydrogenase (Escherichia coli O157:H7).